A 344-amino-acid polypeptide reads, in one-letter code: GPALPP motifs-containing protein 1 (344 aa).

Residues 1–309 (MARDLIGPAL…QERIPFDRDK (309 aa)) are disordered. Position 2 is an N-acetylalanine (Ala-2). The short motif at 7-12 (GPALPP) is the GPALPP motif 1 element. Residue Ser-28 is modified to Phosphoserine. Residues 30-35 (GPALPP) carry the GPALPP motif 2 motif. 2 stretches are compositionally biased toward acidic residues: residues 58–67 (GNQESEEDDT) and 80–93 (DDNDDDDDDDDDDG). The GPALPP motif 3 signature appears at 96 to 101 (GPALPP). Ser-109 is subject to Phosphoserine. Positions 111–120 (PRPIIGPALP) are enriched in pro residues. A GPALPP motif 4 motif is present at residues 116–121 (GPALPP). The segment covering 128–137 (QKSDKGRDDP) has biased composition (basic and acidic residues). Position 142 is a phosphothreonine (Thr-142). A phosphoserine mark is found at Ser-144 and Ser-145. 4 stretches are compositionally biased toward basic and acidic residues: residues 167–191 (EFEKRAQRMKEKLTKGDDDSSKPIV), 231–265 (PADRERKAKETQEARKSSSKKDEEHILSGRDKRLA), 273–283 (ESKRSESLMDI), and 291–309 (KAAEDKNKPQERIPFDRDK). A Glycyl lysine isopeptide (Lys-Gly) (interchain with G-Cter in SUMO2) cross-link involves residue Lys-275. Lys-312 participates in a covalent cross-link: Glycyl lysine isopeptide (Lys-Gly) (interchain with G-Cter in SUMO2).

The protein is GPALPP motifs-containing protein 1 (GPALPP1) of Pongo abelii (Sumatran orangutan).